Consider the following 665-residue polypeptide: MLWLTVSLTGFALLGVVAAQQIEGFYYPYHLLGLSDGCVETLNTTISSCSQVLGQQANLDSGAVRVLVAPDLNELCTTACVDDLKSLKTKIQSTCSKDDVMVKNDIAYPGSWKAQLESPFGYDDSLASDFSSQTSSCHATGFTFTTPTAYALNTTATPAPTPICQRTYTVLATDTCASIAQANKVATFGVVSLNNLGTGCEALVEGKTLCLPETCTLRKITRDDDCGQVVKDANTTIPRLIAWNPMLNPECSNFLDYIGYYICISCLLRTPGGSAKPIEGETAITAVPVPTNANAESQKNCAKWYVVQPGDGCADISVANGITLVDFYFLNSGVNRDCTNLWLGYAYCVKPVGNIQTYPGYPVTVPSTSFTRPPALTETSTETLVLPTPTYAPGTYDNCSDYSRGMPASWSDAAKLNSCSFIAHINGVTVSQLLQWNPSLSKDSCSLSRELYYCVRMGQPVSEPIDYDGTLCMNIQDDKDIVPGTISNCNCFSYVSGGLGKLYTTCEDIVSEFDYDVGHLVELNPWLTKANCTKELFADLSGPYDYRYFCISNTGDPLHQSPAKSQTRTIHTTSTVQRAVISTPSSVSMTNSAPATATSTGGPPAPTQDGAVSNCTKWHVVESGDGCWAIYTKYGITSDQLFEWNTKISKDCSNIWLGYAVCVGV.

The signal sequence occupies residues 1–19 (MLWLTVSLTGFALLGVVAA). N-linked (GlcNAc...) asparagine glycans are attached at residues Asn-43 and Asn-153. LysM domains follow at residues 166 to 211 (RTYT…TLCL), 216 to 264 (TLRK…YICI), and 303 to 349 (KWYV…AYCV). N-linked (GlcNAc...) asparagine glycosylation is present at Asn-234. Asn-398 is a glycosylation site (N-linked (GlcNAc...) asparagine). Residues 409–454 (SWSDAAKLNSCSFIAHINGVTVSQLLQWNPSLSKDSCSLSRELYYC) enclose the LysM 4 domain. A glycan (N-linked (GlcNAc...) asparagine) is linked at Asn-531. Residues 585–610 (SSVSMTNSAPATATSTGGPPAPTQDG) are disordered. Residues 592-602 (SAPATATSTGG) show a composition bias toward low complexity. Residue Asn-614 is glycosylated (N-linked (GlcNAc...) asparagine). In terms of domain architecture, LysM 5 spans 617–663 (KWHVVESGDGCWAIYTKYGITSDQLFEWNTKISKDCSNIWLGYAVCV).

The protein belongs to the secreted LysM effector family.

Its function is as follows. Might have a role in sequestration of chitin oligosaccharides (breakdown products of fungal cell walls that are released during invasion and act as triggers of host immunity) to dampen host defense. The polypeptide is Secreted LysM effector Lys3 (Pochonia chlamydosporia (strain 123) (Metacordyceps chlamydosporia)).